We begin with the raw amino-acid sequence, 308 residues long: HTH-type transcriptional regulator YtlI (308 aa).

The 57-residue stretch at 1-57 (MELRSIKTFHTIVKFGSFYKAAEILNYSQPTISMRMKQLEQDLGVLLFERGKSLQLT) folds into the HTH lysR-type domain. The H-T-H motif DNA-binding region spans 18–37 (FYKAAEILNYSQPTISMRMK).

The protein belongs to the LysR transcriptional regulatory family.

Functionally, positively regulates the expression of ytmI operon in response to the availability of sulfur sources. The chain is HTH-type transcriptional regulator YtlI (ytlI) from Bacillus subtilis (strain 168).